The following is a 141-amino-acid chain: 3-hydroxyacyl-[acyl-carrier-protein] dehydratase FabZ (141 aa).

The active site involves His-48.

It belongs to the thioester dehydratase family. FabZ subfamily.

It is found in the cytoplasm. It catalyses the reaction a (3R)-hydroxyacyl-[ACP] = a (2E)-enoyl-[ACP] + H2O. Functionally, involved in unsaturated fatty acids biosynthesis. Catalyzes the dehydration of short chain beta-hydroxyacyl-ACPs and long chain saturated and unsaturated beta-hydroxyacyl-ACPs. In Bacillus velezensis (strain DSM 23117 / BGSC 10A6 / LMG 26770 / FZB42) (Bacillus amyloliquefaciens subsp. plantarum), this protein is 3-hydroxyacyl-[acyl-carrier-protein] dehydratase FabZ.